The primary structure comprises 78 residues: Polcalcin Phl p 7 (78 aa).

EF-hand domains follow at residues 1 to 35 (MADD…LGST) and 35 to 70 (TSAD…NPGL). Ca(2+) contacts are provided by D13, N15, D17, K19, E24, D48, D50, D52, and E59.

Monomer. Specifically expressed in pollen.

Functionally, may be involved in the regulation of pollen-tube growth. The sequence is that of Polcalcin Phl p 7 from Phleum pratense (Common timothy).